The following is a 120-amino-acid chain: Large ribosomal subunit protein bL12 (120 aa).

Belongs to the bacterial ribosomal protein bL12 family. Homodimer. Part of the ribosomal stalk of the 50S ribosomal subunit. Forms a multimeric L10(L12)X complex, where L10 forms an elongated spine to which 2 to 4 L12 dimers bind in a sequential fashion. Binds GTP-bound translation factors.

Functionally, forms part of the ribosomal stalk which helps the ribosome interact with GTP-bound translation factors. Is thus essential for accurate translation. In Alkaliphilus metalliredigens (strain QYMF), this protein is Large ribosomal subunit protein bL12.